Here is a 268-residue protein sequence, read N- to C-terminus: Ribosomal RNA large subunit methyltransferase E (268 aa).

Residues Gly-50, Trp-52, Asp-68, Asp-84, and Asp-109 each contribute to the S-adenosyl-L-methionine site. Residue Lys-149 is the Proton acceptor of the active site. Residues 196-254 (PLRKGDKFVVDIEKLGSSGDGAVLIEGFVVFVKEVEVGEKVRIKISDVKPNFAFADVEE) form the TRAM domain.

It belongs to the class I-like SAM-binding methyltransferase superfamily. RNA methyltransferase RlmE family.

Its subcellular location is the cytoplasm. It catalyses the reaction uridine(2552) in 23S rRNA + S-adenosyl-L-methionine = 2'-O-methyluridine(2552) in 23S rRNA + S-adenosyl-L-homocysteine + H(+). Its function is as follows. Specifically methylates the uridine in position 2552 of 23S rRNA at the 2'-O position of the ribose in the fully assembled 50S ribosomal subunit. This Methanosarcina mazei (strain ATCC BAA-159 / DSM 3647 / Goe1 / Go1 / JCM 11833 / OCM 88) (Methanosarcina frisia) protein is Ribosomal RNA large subunit methyltransferase E.